A 200-amino-acid polypeptide reads, in one-letter code: LexA repressor (200 aa).

A DNA-binding region (H-T-H motif) is located at residues 28 to 48 (RAEIAQHFGFSSPNAAEQHLK). Catalysis depends on for autocatalytic cleavage activity residues Ser117 and Lys154.

It belongs to the peptidase S24 family. Homodimer.

The catalysed reaction is Hydrolysis of Ala-|-Gly bond in repressor LexA.. In terms of biological role, represses a number of genes involved in the response to DNA damage (SOS response), including recA and lexA. In the presence of single-stranded DNA, RecA interacts with LexA causing an autocatalytic cleavage which disrupts the DNA-binding part of LexA, leading to derepression of the SOS regulon and eventually DNA repair. The sequence is that of LexA repressor from Thiobacillus denitrificans (strain ATCC 25259 / T1).